The primary structure comprises 289 residues: Pre-mRNA-splicing factor cwf23 (289 aa).

Residues 9–74 (DYYELLGINE…QLRKAYDSER (66 aa)) enclose the J domain. A compositionally biased stretch (basic and acidic residues) spans 129–148 (ESANLRRQRENRLREEQEQS). 2 disordered regions span residues 129–161 (ESAN…SKIS) and 269–289 (KQKH…TMNA).

Belongs to the DnaJ family. In terms of assembly, belongs to the 40S cdc5-associated complex (or cwf complex), a spliceosome sub-complex reminiscent of a late-stage spliceosome composed of the U2, U5 and U6 snRNAs and at least brr2, cdc5, cwf2/prp3, cwf3/syf1, cwf4/syf3, cwf5/ecm2, spp42/cwf6, cwf7/spf27, cwf8, cwf9, cwf10, cwf11, cwf12, prp45/cwf13, cwf14, cwf15, cwf16, cwf17, cwf18, cwf19, cwf20, cwf21, cwf22, cwf23, cwf24, cwf25, cwf26, cyp7/cwf27, cwf28, cwf29/ist3, lea1, msl1, prp5/cwf1, prp10, prp12/sap130, prp17, prp22, sap61, sap62, sap114, sap145, slu7, smb1, smd1, smd3, smf1, smg1 and syf2.

The protein resides in the cytoplasm. It is found in the nucleus. In terms of biological role, involved in pre-mRNA splicing. May be involved in endoplasmic reticulum-associated protein degradation (ERAD) and required for growth at low and high temperatures. The chain is Pre-mRNA-splicing factor cwf23 (cwf23) from Schizosaccharomyces pombe (strain 972 / ATCC 24843) (Fission yeast).